Here is a 263-residue protein sequence, read N- to C-terminus: Type III pantothenate kinase (263 aa).

Asp9–Lys16 contributes to the ATP binding site. Substrate is bound by residues Tyr103 and Gly110–Arg113. Asp112 acts as the Proton acceptor in catalysis. Asp134 serves as a coordination point for K(+). Thr137 contacts ATP. Position 190 (Thr190) interacts with substrate.

This sequence belongs to the type III pantothenate kinase family. As to quaternary structure, homodimer. The cofactor is NH4(+). It depends on K(+) as a cofactor.

The protein localises to the cytoplasm. The catalysed reaction is (R)-pantothenate + ATP = (R)-4'-phosphopantothenate + ADP + H(+). It functions in the pathway cofactor biosynthesis; coenzyme A biosynthesis; CoA from (R)-pantothenate: step 1/5. In terms of biological role, catalyzes the phosphorylation of pantothenate (Pan), the first step in CoA biosynthesis. This is Type III pantothenate kinase from Oleidesulfovibrio alaskensis (strain ATCC BAA-1058 / DSM 17464 / G20) (Desulfovibrio alaskensis).